The chain runs to 645 residues: Octopamine receptor Oamb (645 aa).

At 1 to 25 (MNETECEDLIKSVKWTEPANLISLA) the chain is on the extracellular side. Asparagine 2 carries N-linked (GlcNAc...) asparagine glycosylation. Residues 26–46 (VLEFINVLVIGGNCLVIAAVF) traverse the membrane as a helical segment. Topologically, residues 47-56 (CSNKLRSVTN) are cytoplasmic. Residues 57–77 (FFIVNLAVADLLVGLAVLPFS) traverse the membrane as a helical segment. Topologically, residues 78–94 (ATWEVFKVWIFGDLWCR) are extracellular. Cysteine 93 and cysteine 287 are joined by a disulfide. The chain crosses the membrane as a helical span at residues 95–115 (IWLAVDVWMCTASILNLCAIS). The Cytoplasmic segment spans residues 116 to 138 (LDRYVAVTRPVTYPSIMSTKKAK). A helical membrane pass occupies residues 139-159 (SLIAGIWVLSFFICFPPLVGW). Residues 160-295 (KDQKAVIQPT…KCELTNDRGY (136 aa)) are Extracellular-facing. Asparagine 174 carries an N-linked (GlcNAc...) asparagine glycan. The segment at 190 to 212 (QLGLDSIKDQGEASLPPSPPHIG) is disordered. A helical transmembrane segment spans residues 296–316 (VLYSALGSFYIPMFVMLFFYW). Residues 317 to 520 (RIYRAAVRTT…FRMETKAAKT (204 aa)) are Cytoplasmic-facing. Disordered stretches follow at residues 358–386 (GRGSNQQDSMHSNGSTQSTTTTLGTPSPE) and 479–500 (RQSNTSEAGGSGHSRPANKKMG). Positions 369–385 (SNGSTQSTTTTLGTPSP) are enriched in low complexity. A helical membrane pass occupies residues 521–541 (LAIIVGMFIFCWCPFFTMYII). The Extracellular portion of the chain corresponds to 542 to 551 (RPFCQDCVDP). Residues 552–572 (LLFSVLFWLGYCNSAVNPMIY) traverse the membrane as a helical segment. The Cytoplasmic portion of the chain corresponds to 573–645 (ALFSKDFRFA…HHSEMSNDPR (73 aa)). The interval 621–645 (TPSAAAHSFGDESELHHSEMSNDPR) is disordered. Over residues 629–645 (FGDESELHHSEMSNDPR) the composition is skewed to basic and acidic residues.

It belongs to the G-protein coupled receptor 1 family. In terms of tissue distribution, highly enriched in mushroom body neuropil and in the ellipsoid body (at protein level). Expressed in oviduct epithelium (at protein level). Expressed in the adult and larval brain, thoracic and abdominal ganglia, terminal cells of the larval tracheal system, muscle, mature eggs and reproductive system.

Its subcellular location is the cell membrane. Its function is as follows. Receptor for octopamine (OA) which is a neurotransmitter, neurohormone and neuromodulator in invertebrates. Stimulates intracellular accumulation of cAMP and Ca(2+) following ligand binding. Required for ovulation. Following activation on mature follicle cells by OA, induces activity of the metalloprotease Mmp2 which leads to breakdown of the posterior follicle wall, resulting in ovulation. Ligand binding probably also leads to activation of CamKII which is also required for ovulation. Modulates sleep/wake behavior by acting in neurons of the pars intercerebralis to promote wakefulness. Plays a role in courtship conditioning where the courtship behavior of males rejected by already mated females is inhibited with further females. Required in the mushroom body for appetitive olfactory learning. Specifically conveys the short-term reinforcing effects of sweet taste. In insulin-producing cells of the brain, plays a role in inhibiting transcription of insulin-like peptide Ilp3. Also plays a role in social behavior by modulating male agression. In Drosophila melanogaster (Fruit fly), this protein is Octopamine receptor Oamb.